The primary structure comprises 339 residues: UDP-N-acetylenolpyruvoylglucosamine reductase (339 aa).

Residues G18–R189 form the FAD-binding PCMH-type domain. R166 is a catalytic residue. Catalysis depends on S239, which acts as the Proton donor. E335 is a catalytic residue.

It belongs to the MurB family. FAD is required as a cofactor.

It is found in the cytoplasm. It carries out the reaction UDP-N-acetyl-alpha-D-muramate + NADP(+) = UDP-N-acetyl-3-O-(1-carboxyvinyl)-alpha-D-glucosamine + NADPH + H(+). The protein operates within cell wall biogenesis; peptidoglycan biosynthesis. Cell wall formation. This Pseudomonas aeruginosa (strain ATCC 15692 / DSM 22644 / CIP 104116 / JCM 14847 / LMG 12228 / 1C / PRS 101 / PAO1) protein is UDP-N-acetylenolpyruvoylglucosamine reductase.